The chain runs to 767 residues: MSTLTSVSGFPRIGQNRELKKIIEGYWKGANDLAAVKATAAELRAKHWKLQQAAGIDLIPSNDFSYYDQMLDTAILLNVIPQRYARLSFDNQEDTLFAMARGYQGDKGDVTALPMKKWFTTNYHYLVPEVESAAEIKLNSTKPFDEFNEAKALGIDTKPVFIGPYTFLKLARTPEATELELDKGLVNAVAAVYVEVLAKFNELGAAWVQLDEPYLVLDKEPGDVELFKTLYTKILSAKGNVKVLLNTYFGHIADVYETVNLLGFDGIGLDLNEGREENLEAVAKYGVASNTTIFAGVINGRNIWRNNYATSLGLVDALKQVTANVAVSTASSLLHVPFSTEGETGIPAEDLKHFAFAVQKLDELKEVAALADATEDEKKASAALAANQALFDGTRVAADPAVAERIGKLSDADYVRQPAREERQALQREALGLPLLPTTTIGSFPQTKEIRAERAKLRKGEVTKEAYDEFIKAQIDAVIKKQEEIGLDVLVHGEFERNDMVEYFGQNLNGFLFTKNAWVQSYGTRCVKPPIVWGDVSRANPITVEWSAYAQSKTDHVMKGMLTGPVTILNWSWPREDITHEEQTKQLALAIRDEVLDLEAAGIKVIQIDEAALREKLPLRKSDWHVKYLDWAVPAFRLVHSAVKPTTQIHTHMCYSEFNDIIRDIDAMDADVISFEASRGDLVVLDAIHDAHFETEAGPGVYDIHSPRIPSEKEIEDRIYEILDKMDVKKVWINPDCGLKTRGNAETWPSLENLVAAAKAVRAKLDK.

Residues 17 to 20 (RELK) and lysine 117 each bind 5-methyltetrahydropteroyltri-L-glutamate. L-homocysteine contacts are provided by residues 441–443 (IGS) and glutamate 494. L-methionine contacts are provided by residues 441 to 443 (IGS) and glutamate 494. Residues 525–526 (RC) and tryptophan 571 each bind 5-methyltetrahydropteroyltri-L-glutamate. Residue aspartate 609 coordinates L-homocysteine. Position 609 (aspartate 609) interacts with L-methionine. Residue glutamate 615 participates in 5-methyltetrahydropteroyltri-L-glutamate binding. Histidine 652, cysteine 654, and glutamate 676 together coordinate Zn(2+). The active-site Proton donor is the histidine 705. Cysteine 737 provides a ligand contact to Zn(2+).

The protein belongs to the vitamin-B12 independent methionine synthase family. Zn(2+) serves as cofactor.

The catalysed reaction is 5-methyltetrahydropteroyltri-L-glutamate + L-homocysteine = tetrahydropteroyltri-L-glutamate + L-methionine. It functions in the pathway amino-acid biosynthesis; L-methionine biosynthesis via de novo pathway; L-methionine from L-homocysteine (MetE route): step 1/1. Its function is as follows. Catalyzes the transfer of a methyl group from 5-methyltetrahydrofolate to homocysteine resulting in methionine formation. In Bifidobacterium longum (strain NCC 2705), this protein is 5-methyltetrahydropteroyltriglutamate--homocysteine methyltransferase.